A 544-amino-acid chain; its full sequence is Neurofilament light polypeptide (544 aa).

Residue serine 2 is modified to N-acetylserine. The segment at 2–87 (SSYSYDPYYT…KIVRTQEKVQ (86 aa)) is head. The 311-residue stretch at 84–394 (EKVQLQDLND…KLLEGEETRL (311 aa)) folds into the IF rod domain. The tract at residues 88–119 (LQDLNDRFANFIERVHELEQRNKVLEAELLLL) is coil 1A. Residues 120-132 (RQKHNEPSRLRDM) form a linker 1 region. The tract at residues 133–228 (YEKEVRDVRL…KVHEEELSQL (96 aa)) is coil 1B. Residues 229 to 246 (QSQVQYAQVSLEVEVAKP) form a linker 12 region. The tract at residues 247 to 265 (DLSSALRDIRGQYEKLAAK) is coil 2A. The linker 2 stretch occupies residues 266–274 (NMQSAEEWF). Positions 275 to 390 (KSRFTVLTQS…AAYRKLLEGE (116 aa)) are coil 2B. Residues 391 to 435 (ETRLSFSGVGAITSGYTQSAPVFGRSAYSLQSSSYMTSRAFPTYY) form a tail, subdomain A region. Positions 391 to 544 (ETRLSFSGVG…EESEKKEKKK (154 aa)) are tail. The tail, subdomain B (acidic) stretch occupies residues 436-544 (SSHVQEEQLD…EESEKKEKKK (109 aa)). The interval 450 to 544 (IESSRAEEAK…EESEKKEKKK (95 aa)) is disordered. The span at 451-462 (ESSRAEEAKAEA) shows a compositional bias: basic and acidic residues. Over residues 463-525 (PEEEEEEAAE…EAEGDGEEEG (63 aa)) the composition is skewed to acidic residues. Basic and acidic residues predominate over residues 526-544 (ESKGDEAAEEESEKKEKKK).

Belongs to the intermediate filament family. As to quaternary structure, forms homodimers (in vitro).

Its subcellular location is the cell projection. It localises to the axon. It is found in the cytoplasm. The protein resides in the cytoskeleton. Neurofilaments usually contain three intermediate filament proteins: NEFL, NEFM, and NEFH which are involved in the maintenance of neuronal caliber. May additionally cooperate with other neuronal intermediate filament proteins to form neuronal filamentous networks. This is Neurofilament light polypeptide (nefl) from Xenopus laevis (African clawed frog).